The chain runs to 262 residues: Snake venom serine protease catroxase-1 (262 aa).

Residues 1 to 18 (MVLIRVLANLLILQLSYA) form the signal peptide. Positions 19-24 (QKSSEP) are excised as a propeptide. One can recognise a Peptidase S1 domain in the interval 25 to 250 (IIGGDECNRN…HLDWIQSIIA (226 aa)). 6 cysteine pairs are disulfide-bonded: cysteine 31-cysteine 162, cysteine 49-cysteine 65, cysteine 97-cysteine 257, cysteine 141-cysteine 211, cysteine 173-cysteine 190, and cysteine 201-cysteine 226. The active-site Charge relay system is the histidine 64. N-linked (GlcNAc...) asparagine glycosylation is present at asparagine 102. Aspartate 109 functions as the Charge relay system in the catalytic mechanism. The N-linked (GlcNAc...) asparagine glycan is linked to asparagine 169. The active-site Charge relay system is the serine 205.

It belongs to the peptidase S1 family. Snake venom subfamily. As to quaternary structure, monomer. Expressed by the venom gland.

It is found in the secreted. Its function is as follows. Snake venom serine protease that may act in the hemostasis system of the prey. This chain is Snake venom serine protease catroxase-1, found in Crotalus atrox (Western diamondback rattlesnake).